The sequence spans 479 residues: GTPase Obg (479 aa).

In terms of domain architecture, Obg spans 2–159 (PRFVDRVVIH…RDLTLELKTV (158 aa)). The region spanning 160–340 (ADVGLVGFPS…LIFGLWQMVS (181 aa)) is the OBG-type G domain. GTP contacts are provided by residues 166–173 (GFPSAGKS), 191–195 (FTTLV), 212–215 (DVPG), 292–295 (NKID), and 321–323 (STV). Mg(2+) contacts are provided by serine 173 and threonine 193. The OCT domain maps to 358–436 (PVPVDDSGFD…IGEMTFDWEP (79 aa)). Residues 438-479 (TPAGGHVAMSGRGTDVRLERSDRVGAAERKAARRQRRERDDD) form a disordered region. Residues 451-467 (TDVRLERSDRVGAAERK) show a composition bias toward basic and acidic residues.

This sequence belongs to the TRAFAC class OBG-HflX-like GTPase superfamily. OBG GTPase family. In terms of assembly, monomer. Mg(2+) is required as a cofactor.

The protein resides in the cytoplasm. Its function is as follows. An essential GTPase which binds GTP, GDP and possibly (p)ppGpp with moderate affinity, with high nucleotide exchange rates and a fairly low GTP hydrolysis rate. Plays a role in control of the cell cycle, stress response, ribosome biogenesis and in those bacteria that undergo differentiation, in morphogenesis control. This chain is GTPase Obg, found in Mycobacterium marinum (strain ATCC BAA-535 / M).